We begin with the raw amino-acid sequence, 340 residues long: Probable complex I intermediate-associated protein 30, mitochondrial (340 aa).

The protein belongs to the CIA30 family.

The protein localises to the mitochondrion. In terms of biological role, chaperone protein involved in the assembly of the mitochondrial NADH:ubiquinone oxidoreductase complex (complex I). Required for normal growth and reproduction. This is Probable complex I intermediate-associated protein 30, mitochondrial (nuaf-1) from Caenorhabditis elegans.